A 1019-amino-acid polypeptide reads, in one-letter code: Type VI secretion system spike protein VgrG2b (1019 aa).

The segment at 268 to 291 (AGRPFTESRLRGHRRDARVASVSG) is disordered. Histidine 935 lines the Zn(2+) pocket. Glutamate 936 is an active-site residue. Zn(2+) contacts are provided by histidine 939 and glutamate 983.

Belongs to the VgrG protein family. In terms of assembly, interacts with Tla3; this interaction promotes Tle3 loading onto VgrG2b. Interacts with host gamma-tubulin ring complex components GCP1 and GCP4. It depends on Zn(2+) as a cofactor.

The protein localises to the secreted. In terms of biological role, part of the H2 type VI secretion system (H2-T6SS) specialized secretion system, which delivers several virulence factors in both prokaryotic and eukaryotic cells during infection. Forms the spike at the tip of the elongating tube probably formed by haemolysin co-regulated protein 2b/Hcp2b. Allows the delivery of the Tle3 antibacterial toxin to target cells where it exerts its toxicity. Additionally, acts directly as an effector and promotes internalization by interacting with the host gamma-tubulin ring complex. Elicits toxicity also in the bacterial periplasm and disrupts bacterial cell morphology. Toxicity is counteracted by a cognate immunity protein. The chain is Type VI secretion system spike protein VgrG2b (vgrG2b) from Pseudomonas aeruginosa (strain ATCC 15692 / DSM 22644 / CIP 104116 / JCM 14847 / LMG 12228 / 1C / PRS 101 / PAO1).